Reading from the N-terminus, the 369-residue chain is MAYSTVQRVALASGLVLALSLLLPKAFLSRGKRQEPPPTPEGKLGRFPPMMHHHQAPSDGQTPGARFQRSHLAEAFAKAKGSGGGAGGGGSGRGLMGQIIPIYGFGIFLYILYILFKLSKGKTTAEDGKCYTAMPGNTHRKITSFELAQLQEKLKETEAAMEKLINRVGPNGESRAQTVTSDQEKRLLHQLREITRVMKEGKFIDRFSPEKEAEEAPYMEDWEGYPEETYPIYDLSDCIKRRQETILVDYPDPKELSAEEIAERMGMIEEEESDHLGWESLPTDPRAQEDNSVTSCDPKPETCSCCFHEDEDPAVLAENAGFSADSYPEQEETTKEEWSQDFKDEGLGISTDKAYTGSMLRKRNPQGLE.

The first 28 residues, 1–28, serve as a signal peptide directing secretion; sequence MAYSTVQRVALASGLVLALSLLLPKAFL. The Lumenal portion of the chain corresponds to 29-95; sequence SRGKRQEPPP…AGGGGSGRGL (67 aa). The segment at 30–67 is disordered; sequence RGKRQEPPPTPEGKLGRFPPMMHHHQAPSDGQTPGARF. Residues 96–116 form a helical membrane-spanning segment; it reads MGQIIPIYGFGIFLYILYILF. Residues 117–369 are Cytoplasmic-facing; it reads KLSKGKTTAE…LRKRNPQGLE (253 aa). Positions 140 to 169 form a coiled coil; that stretch reads RKITSFELAQLQEKLKETEAAMEKLINRVG. Residue lysine 202 is modified to N6-acetyllysine; alternate. Residue lysine 202 forms a Glycyl lysine isopeptide (Lys-Gly) (interchain with G-Cter in ubiquitin); alternate linkage. Disordered stretches follow at residues 272–295 and 316–369; these read ESDHLGWESLPTDPRAQEDNSVTS and LAEN…QGLE. Basic and acidic residues predominate over residues 332 to 346; the sequence is ETTKEEWSQDFKDEG. Residues 360-369 show a composition bias toward basic residues; the sequence is LRKRNPQGLE.

The protein belongs to the ric-3 family. As to quaternary structure, monomer and homodimer. Interacts with CHRNA7, CHRNA3, CHRNA4, CHRNB2, CHRNB4 and HTR3A. In terms of tissue distribution, broadly expressed, with high levels in muscle, brain, heart, pancreas and testis. In the central nervous system, highest levels are detected in the cerebellum and pituitary gland. Over-expressed in brains from patients with bipolar disease or schizophrenia. Isoform 5 is predominantly expressed in the brain.

It localises to the endoplasmic reticulum membrane. Its subcellular location is the golgi apparatus membrane. Functionally, molecular chaperone which facilitates proper subunit assembly and surface trafficking of alpha-7 (CHRNA7) and alpha-8 (CHRNA8) nicotinic acetylcholine receptors. May also promote functional expression of homomeric serotoninergic 5-HT3 receptors, and of heteromeric acetylcholine receptors alpha-3/beta-2, alpha-3/beta-4, alpha-4/beta-2 and alpha-4/beta-4. This chain is Protein RIC-3 (RIC3), found in Homo sapiens (Human).